Here is a 240-residue protein sequence, read N- to C-terminus: Protein OPG176 (240 aa).

Belongs to the orthopoxvirus OPG176 family. As to quaternary structure, tetramer. Interacts with host MYD88, TRF4, TICAM2 and MAL.

BCL2-like protein which disrupts the host immune response by inhibiting the TLR4 signaling pathway leading to NF-kappa-B activation. Acts close to the plasma membrane and targets several host TIR-domain containing adapter proteins including MYD88, TIRAP, TRIF and TICAM2. In turn, blocks the host NF-kappa-B and TRIF-mediated IRF3 activation. The chain is Protein OPG176 (OPG176) from Bos taurus (Bovine).